A 680-amino-acid chain; its full sequence is Galactose oxidase (680 aa).

An N-terminal signal peptide occupies residues 1 to 24 (MKHLLTLALCFSSINAVAVTVPHK). Positions 25 to 41 (AVGTGIPEGSLQFLSLR) are excised as a propeptide. Residues 42–189 (ASAPIGSAIS…SIAEINVFQA (148 aa)) enclose the F5/8 type C domain. A disulfide bond links Cys59 and Cys68. 5 Kelch repeats span residues 223–268 (RVLM…HDMF), 279–321 (QIVV…TMSD), 323–372 (RVFT…LYRS), 436–490 (KILT…VLPD), and 492–544 (STFI…LLLP). Positions 269–313 (CPGISMDGNGQIVVTGGNDAKKTSLYDSSSDSWIPGPDMQVARGY) form a cross-link, 3'-(S-cysteinyl)-tyrosine (Cys-Tyr). Tyr313 contributes to the Cu cation binding site. Tyr536 and His537 together coordinate Cu cation. The active-site Proton acceptor is the Tyr536. The cysteines at positions 556 and 559 are disulfide-linked. Residue His622 participates in Cu cation binding.

Monomer. It depends on Cu(2+) as a cofactor. Galactose oxidase contains a protein-derived free radical cofactor. In the active state, Tyr-313, which is cross-linked to Cys-269 via a thioether bond, is oxidized to a radical and acts with Cu(2+) as a two-electron acceptor in the oxidation reaction. The cross-link is believed to modulate the redox potential of the tyrosyl radical, which is further stabilized by a stacking interaction with Trp-331 in the active site. The post-translational formation of the cross-link is closely linked to the propeptide cleavage event, and both are copper-dependent, autocatalytic processes. The propeptide may act as an intramolecular chaperone, facilitating thioester bond formation and copper binding by positioning of active-site residues, including copper ligands.

The protein resides in the secreted. The enzyme catalyses D-galactose + O2 = D-galacto-hexodialdose + H2O2. Its activity is regulated as follows. Inhibited by diethyldithiocarbamate. In terms of biological role, catalyzes the sterospecific oxidation of primary alcohols to the corresponding aldehydes. The biologically relevant substrate of the enzyme is not known as the enzyme exhibits broad substrate specificity from small alcohols through sugars to oligo- and polysaccharides. The chain is Galactose oxidase (GAOA) from Gibberella zeae (Wheat head blight fungus).